A 221-amino-acid polypeptide reads, in one-letter code: Leucyl/phenylalanyl-tRNA--protein transferase (221 aa).

Belongs to the L/F-transferase family.

It localises to the cytoplasm. It catalyses the reaction N-terminal L-lysyl-[protein] + L-leucyl-tRNA(Leu) = N-terminal L-leucyl-L-lysyl-[protein] + tRNA(Leu) + H(+). The catalysed reaction is N-terminal L-arginyl-[protein] + L-leucyl-tRNA(Leu) = N-terminal L-leucyl-L-arginyl-[protein] + tRNA(Leu) + H(+). It carries out the reaction L-phenylalanyl-tRNA(Phe) + an N-terminal L-alpha-aminoacyl-[protein] = an N-terminal L-phenylalanyl-L-alpha-aminoacyl-[protein] + tRNA(Phe). Its function is as follows. Functions in the N-end rule pathway of protein degradation where it conjugates Leu, Phe and, less efficiently, Met from aminoacyl-tRNAs to the N-termini of proteins containing an N-terminal arginine or lysine. The sequence is that of Leucyl/phenylalanyl-tRNA--protein transferase from Phenylobacterium zucineum (strain HLK1).